A 452-amino-acid polypeptide reads, in one-letter code: UPF0210 protein Ccel_1722 (452 aa).

Belongs to the UPF0210 family. In terms of assembly, homodimer.

This chain is UPF0210 protein Ccel_1722, found in Ruminiclostridium cellulolyticum (strain ATCC 35319 / DSM 5812 / JCM 6584 / H10) (Clostridium cellulolyticum).